The sequence spans 443 residues: Trihelix transcription factor ASIL2 (443 aa).

Residues 1–82 (MEDDEDIRSQ…RPTGGGGRED (82 aa)) are disordered. The span at 38-48 (YSLTPPGNSSQ) shows a compositional bias: polar residues. Residues 64 to 78 (SGGGNNSSGRPTGGG) are compositionally biased toward gly residues. Positions 84–144 (WSEAATAVLI…QCKNRIDTVK (61 aa)) constitute a Myb-like domain. Disordered regions lie at residues 238-350 (FGGS…GNKW) and 413-443 (RRMG…LGNN). Over residues 239–249 (GGSGGGGGGGS) the composition is skewed to gly residues. A compositionally biased stretch (low complexity) spans 271–286 (TLPQQGRTLPQQQQQG). The short motif at 290–303 (KRCSESKRWRFRKR) is the Bipartite nuclear localization signal element. Over residues 333-350 (MKTEEKKKQDGDGVGNKW) the composition is skewed to basic and acidic residues. Residues 360–414 (FGEAYEQTENAKLQQVVEMEKERMKFLKELELQRMQFFVKTQLEISQLKQQHGRR) adopt a coiled-coil conformation. Over residues 428-443 (NNINAIVNNNNDLGNN) the composition is skewed to low complexity.

The protein resides in the nucleus. Functionally, transcription regulator that may repress the maturation program during early embryogenesis. This chain is Trihelix transcription factor ASIL2, found in Arabidopsis thaliana (Mouse-ear cress).